Consider the following 155-residue polypeptide: Putative ATP synthase protein YMF19-like protein (155 aa).

Transmembrane regions (helical) follow at residues 23-43, 89-109, and 117-137; these read FLWLCLFYITFYFVLYSVLVF, WRALILAYLTSIYFFPILGSF, and VDFGYIPTVCILLYVIFLFFF.

It belongs to the ATPase protein YMF19 family.

It localises to the mitochondrion membrane. The chain is Putative ATP synthase protein YMF19-like protein (YMF18) from Marchantia polymorpha (Common liverwort).